The sequence spans 954 residues: Glycine dehydrogenase (decarboxylating) (954 aa).

Lysine 704 bears the N6-(pyridoxal phosphate)lysine mark.

It belongs to the GcvP family. The glycine cleavage system is composed of four proteins: P, T, L and H. Pyridoxal 5'-phosphate is required as a cofactor.

It carries out the reaction N(6)-[(R)-lipoyl]-L-lysyl-[glycine-cleavage complex H protein] + glycine + H(+) = N(6)-[(R)-S(8)-aminomethyldihydrolipoyl]-L-lysyl-[glycine-cleavage complex H protein] + CO2. The glycine cleavage system catalyzes the degradation of glycine. The P protein binds the alpha-amino group of glycine through its pyridoxal phosphate cofactor; CO(2) is released and the remaining methylamine moiety is then transferred to the lipoamide cofactor of the H protein. The protein is Glycine dehydrogenase (decarboxylating) of Rhizobium leguminosarum bv. trifolii (strain WSM2304).